Consider the following 158-residue polypeptide: Cyclic pyranopterin monophosphate synthase (158 aa).

Substrate is bound by residues 76 to 78 (LCH) and 114 to 115 (ME). The active site involves D129.

Belongs to the MoaC family. As to quaternary structure, homohexamer; trimer of dimers.

The enzyme catalyses (8S)-3',8-cyclo-7,8-dihydroguanosine 5'-triphosphate = cyclic pyranopterin phosphate + diphosphate. The protein operates within cofactor biosynthesis; molybdopterin biosynthesis. Catalyzes the conversion of (8S)-3',8-cyclo-7,8-dihydroguanosine 5'-triphosphate to cyclic pyranopterin monophosphate (cPMP). The sequence is that of Cyclic pyranopterin monophosphate synthase from Shewanella sediminis (strain HAW-EB3).